The following is a 94-amino-acid chain: Defensin alpha 5 (94 aa).

The N-terminal stretch at 1–19 (MRTIAILAAILLVALQAQA) is a signal peptide. Disulfide bonds link Cys-65/Cys-93, Cys-67/Cys-82, and Cys-72/Cys-92.

This sequence belongs to the alpha-defensin family. In terms of assembly, homodimer. Homotetramer. Interacts with B.antracis lef/lethal factor. Glycosylated. In terms of processing, proteolytically cleaved at Arg-62 by trypsin. Both the propeptide form proHD5/HD5(20-94) and HD5(56-94) are cleaved into the lumenal peptide form HD5(63-94) by trypsin. Unprocessed proHD5 exerts antimicrobial activities, but peptide potency is enhanced by peptide processing. Proteolytically cleaved in duodenal fluid; derived fragments are antimicrobially active against commensal bacteria (in vitro).

It localises to the secreted. The protein resides in the cytoplasmic vesicle. The protein localises to the secretory vesicle. In terms of biological role, host-defense peptide that maintains sterility in the urogenital system. Has antimicrobial activity against a wide range of bacteria, including Gram-negative E.coli, P.aeruginosa and S.typhimurium, and Gram-positive E.aerogenes, S.aureus, B.cereus, E.faecium and L.monocytogenes. Confers resistance to intestinal infection by S.typhimurium. Exhibits antimicrobial activity against enteric commensal bacteria such as B.adolescentis, L.acidophilus, B.breve, L.fermentum, B.longum and S.thermophilus. Binds to bacterial membranes and causes membrane disintegration. Induces the secretion of the chemokine IL-8 by intestinal epithelial cells. Binds to B.antracis lef/lethal factor, a major virulence factor from B.anthracis, and neutralizes its enzymatic activity. The sequence is that of Defensin alpha 5 (DEFA5) from Pan troglodytes (Chimpanzee).